The chain runs to 376 residues: tRNA-specific 2-thiouridylase MnmA (376 aa).

Residues Ala-9 to Ser-16 and Met-35 each bind ATP. Cys-105 serves as the catalytic Nucleophile. Cys-105 and Cys-202 are oxidised to a cystine. Gly-129 provides a ligand contact to ATP. Residues Lys-151–Gln-153 form an interaction with tRNA region. The active-site Cysteine persulfide intermediate is Cys-202. The interval Arg-312 to Tyr-313 is interaction with tRNA.

It belongs to the MnmA/TRMU family.

It is found in the cytoplasm. The enzyme catalyses S-sulfanyl-L-cysteinyl-[protein] + uridine(34) in tRNA + AH2 + ATP = 2-thiouridine(34) in tRNA + L-cysteinyl-[protein] + A + AMP + diphosphate + H(+). Its function is as follows. Catalyzes the 2-thiolation of uridine at the wobble position (U34) of tRNA, leading to the formation of s(2)U34. The chain is tRNA-specific 2-thiouridylase MnmA from Amoebophilus asiaticus (strain 5a2).